A 95-amino-acid chain; its full sequence is MLKSNNASETAAHKVGDKTAKKVFFRRRKGCPLSVSNAPVIDYKNPELLIKFVSEGGRMLPSRITNVCAKKQRKLNNAIKIARILALLPFVFQAK.

The protein belongs to the bacterial ribosomal protein bS18 family. As to quaternary structure, part of the 30S ribosomal subunit. Forms a tight heterodimer with protein bS6.

Functionally, binds as a heterodimer with protein bS6 to the central domain of the 16S rRNA, where it helps stabilize the platform of the 30S subunit. In Rickettsia peacockii (strain Rustic), this protein is Small ribosomal subunit protein bS18.